The primary structure comprises 586 residues: A-type ATP synthase subunit A (586 aa).

233–240 (GPFGSGKT) is an ATP binding site.

This sequence belongs to the ATPase alpha/beta chains family. As to quaternary structure, has multiple subunits with at least A(3), B(3), C, D, E, F, H, I and proteolipid K(x).

Its subcellular location is the cell membrane. It catalyses the reaction ATP + H2O + 4 H(+)(in) = ADP + phosphate + 5 H(+)(out). Component of the A-type ATP synthase that produces ATP from ADP in the presence of a proton gradient across the membrane. The A chain is the catalytic subunit. This chain is A-type ATP synthase subunit A, found in Methanococcus aeolicus (strain ATCC BAA-1280 / DSM 17508 / OCM 812 / Nankai-3).